Consider the following 132-residue polypeptide: Large ribosomal subunit protein uL14 (132 aa).

Belongs to the universal ribosomal protein uL14 family. In terms of assembly, part of the 50S ribosomal subunit. Forms a cluster with proteins L3 and L24e, part of which may contact the 16S rRNA in 2 intersubunit bridges.

Its function is as follows. Binds to 23S rRNA. Forms part of two intersubunit bridges in the 70S ribosome. The sequence is that of Large ribosomal subunit protein uL14 from Methanoregula boonei (strain DSM 21154 / JCM 14090 / 6A8).